We begin with the raw amino-acid sequence, 207 residues long: MSAQIAPAEQVCYVHCNFCNTILAVSVPGNSMLNIVTVRCGHCTNLLSVNLRGLMHSAPALQDHHHHHLQESGLSGCFRDQSGYPEFGFSAASSSSKLRLPPAAAAMVSYSQQNQQLEQALHARPPEKRQRVPSAYNRFIKEEIRRIKANNPDISHREAFSTAAKNWAHYPNIHFGLSPGHEGGKKLVDVDPIPTAPSSKKIQGFYS.

The C4-type zinc-finger motif lies at 16–43; sequence CNFCNTILAVSVPGNSMLNIVTVRCGHC.

It belongs to the YABBY family. In terms of tissue distribution, expressed in leaf blades, leaf sheaths and flowers.

It is found in the nucleus. This chain is Protein YABBY 6 (YAB6), found in Oryza sativa subsp. japonica (Rice).